A 343-amino-acid chain; its full sequence is Dihydroorotate dehydrogenase (quinone) (343 aa).

FMN-binding positions include 61 to 65 (AGLDK) and T85. Substrate is bound at residue K65. 110 to 114 (NRMGF) lines the substrate pocket. FMN is bound by residues N138 and N171. Position 171 (N171) interacts with substrate. Residue S174 is the Nucleophile of the active site. N176 is a binding site for substrate. FMN is bound by residues K216 and T244. 245 to 246 (NT) is a binding site for substrate. FMN is bound by residues G267, G296, and 317–318 (YS).

This sequence belongs to the dihydroorotate dehydrogenase family. Type 2 subfamily. As to quaternary structure, monomer. FMN is required as a cofactor.

The protein localises to the cell membrane. The enzyme catalyses (S)-dihydroorotate + a quinone = orotate + a quinol. It functions in the pathway pyrimidine metabolism; UMP biosynthesis via de novo pathway; orotate from (S)-dihydroorotate (quinone route): step 1/1. Functionally, catalyzes the conversion of dihydroorotate to orotate with quinone as electron acceptor. This chain is Dihydroorotate dehydrogenase (quinone), found in Pseudomonas syringae pv. syringae (strain B728a).